Reading from the N-terminus, the 295-residue chain is ATP synthase gamma chain (295 aa).

It belongs to the ATPase gamma chain family. F-type ATPases have 2 components, CF(1) - the catalytic core - and CF(0) - the membrane proton channel. CF(1) has five subunits: alpha(3), beta(3), gamma(1), delta(1), epsilon(1). CF(0) has three main subunits: a, b and c.

Its subcellular location is the cell inner membrane. In terms of biological role, produces ATP from ADP in the presence of a proton gradient across the membrane. The gamma chain is believed to be important in regulating ATPase activity and the flow of protons through the CF(0) complex. This Maricaulis maris (strain MCS10) (Caulobacter maris) protein is ATP synthase gamma chain.